Reading from the N-terminus, the 327-residue chain is Annexin A8 (327 aa).

Annexin repeat units lie at residues phenylalanine 21 to tyrosine 92, proline 93 to glutamine 164, glycine 177 to lysine 249, and asparagine 253 to glycine 324. Ca(2+) is bound by residues methionine 266, glycine 268, glycine 270, and aspartate 310.

This sequence belongs to the annexin family.

Functionally, this protein is an anticoagulant protein that acts as an indirect inhibitor of the thromboplastin-specific complex, which is involved in the blood coagulation cascade. This is Annexin A8 (Anxa8) from Mus musculus (Mouse).